The chain runs to 336 residues: MMKDRLILAIETSCDETSVAVLRNDAELLSNVIASQIASHQRFGGVVPEVASRHHVEVITACIEEALLEAEVTAEDLTAVAVTYGPGLVGALLVGISAAKAFAWANGLPLIPVNHMAGHLMAARAVKELEFPLLALLVSGGHTELVYVSEAGDYKIVGETRDDAVGEAYDKVGRVMGLPYPAGRVIDELAHEGQDIYDFPRAMIKEDNLEFSFSGLKSAFINLYHNAQQKGETLSNADLSASFQACVMDILMAKTKKALEQYPVKTLVVAGGVAANQGLRERLAAEITDVEVIIPPLRLCGDNAGMIALAAVSEYNKENLAGWDLNAKPSLAFENL.

Positions 115 and 119 each coordinate Fe cation. Substrate-binding positions include 137 to 141, D170, G183, D187, and N276; that span reads LVSGG. D302 serves as a coordination point for Fe cation.

Belongs to the KAE1 / TsaD family. It depends on Fe(2+) as a cofactor.

Its subcellular location is the cytoplasm. It catalyses the reaction L-threonylcarbamoyladenylate + adenosine(37) in tRNA = N(6)-L-threonylcarbamoyladenosine(37) in tRNA + AMP + H(+). Its function is as follows. Required for the formation of a threonylcarbamoyl group on adenosine at position 37 (t(6)A37) in tRNAs that read codons beginning with adenine. Is involved in the transfer of the threonylcarbamoyl moiety of threonylcarbamoyl-AMP (TC-AMP) to the N6 group of A37, together with TsaE and TsaB. TsaD likely plays a direct catalytic role in this reaction. The polypeptide is tRNA N6-adenosine threonylcarbamoyltransferase (Streptococcus suis (strain 98HAH33)).